A 161-amino-acid chain; its full sequence is MSIVTKSIVNADAEARYLSPGELDRIKSFVLSGQRRLRIAQILTDNRERIVKQGGQQLFQKRPDVVSPGGNAYGEEMTATCLRDLDYYLRLVTYGIVAGDVTPIEEIGLVGVKEMYNSLGTPISGVAEGVKCMKSVACSLLAGEDSAEAGFYFDYTLGAMQ.

An N4-methylasparagine modification is found at Asn71. (2R,3E)-phycocyanobilin is bound at residue Cys81.

This sequence belongs to the phycobiliprotein family. Heterodimer of an alpha and a beta chain. Post-translationally, contains one covalently linked phycocyanobilin chromophore.

It localises to the plastid. The protein resides in the chloroplast thylakoid membrane. Its function is as follows. Light-harvesting photosynthetic bile pigment-protein from the phycobiliprotein complex. Allophycocyanin has a maximum absorption at approximately 650 nanometers. The chain is Allophycocyanin alpha chain (apcA) from Porphyra purpurea (Red seaweed).